The primary structure comprises 202 residues: Lipoprotein signal peptidase (202 aa).

The interval 1 to 29 is disordered; it reads MPDEPTGSADPLTSTEEAGGAGEPNAPAP. A run of 3 helical transmembrane segments spans residues 35 to 55, 88 to 108, and 112 to 132; these read MLLS…VVAV, GYTW…FWMG, and VSPW…GNLV. Active-site residues include aspartate 148 and aspartate 162. Residues 160-180 form a helical membrane-spanning segment; it reads VADPSVVGGAILLVILSIFGF.

Belongs to the peptidase A8 family.

The protein resides in the cell membrane. It catalyses the reaction Release of signal peptides from bacterial membrane prolipoproteins. Hydrolyzes -Xaa-Yaa-Zaa-|-(S,diacylglyceryl)Cys-, in which Xaa is hydrophobic (preferably Leu), and Yaa (Ala or Ser) and Zaa (Gly or Ala) have small, neutral side chains.. It functions in the pathway protein modification; lipoprotein biosynthesis (signal peptide cleavage). Its function is as follows. This protein specifically catalyzes the removal of signal peptides from prolipoproteins. The polypeptide is Lipoprotein signal peptidase (Mycobacterium bovis (strain ATCC BAA-935 / AF2122/97)).